Consider the following 525-residue polypeptide: Estrogen receptor (525 aa).

A disordered region spans residues 1-59 (PTSPLVFVPSSPRLSPFMHPPSHHYLETTSTPVYRSSVSSSQQQLSREDQCGTSDDSYS). Residues 1 to 82 (PTSPLVFVPS…GFEMAKEMRF (82 aa)) form a modulating region. The span at 36-45 (SSVSSSQQQL) shows a compositional bias: low complexity. 2 consecutive NR C4-type zinc fingers follow at residues 83–103 (CAVC…CEGC) and 119–143 (CPAT…LRKC). The nuclear receptor DNA-binding region spans 83 to 148 (CAVCSDYASG…RLRKCYQVGM (66 aa)). The tract at residues 149–209 (MKGGVRKDRG…GGGKSSIIGM (61 aa)) is hinge. The segment covering 154–182 (RKDRGRVLRRDKRRTGTSDKASKDLEHRT) has biased composition (basic and acidic residues). Residues 154-203 (RKDRGRVLRRDKRRTGTSDKASKDLEHRTAPPQDRRKHSSSSSSAGGGGK) are disordered. An NR LBD domain is found at 210-446 (SPDQVLLLLQ…DLLLEMLDAH (237 aa)). The span at 452 to 465 (DRPAESWSQADREP) shows a compositional bias: basic and acidic residues. The interval 452-525 (DRPAESWSQA…GPRSDCTHIL (74 aa)) is disordered. Positions 479 to 493 (SGGGDGGPSSAGSGS) are enriched in gly residues.

It belongs to the nuclear hormone receptor family. NR3 subfamily. In terms of assembly, binds DNA as a homodimer. Can form a heterodimer with ER-beta. Abundant in the liver, less abundant in the testes and barely detectable in the ovary and brain.

The protein resides in the nucleus. Functionally, the steroid hormones and their receptors are involved in the regulation of eukaryotic gene expression and affect cellular proliferation and differentiation in target tissues. In Micropogonias undulatus (Atlantic croaker), this protein is Estrogen receptor (esr1).